Reading from the N-terminus, the 426-residue chain is MDQQIYSLQKKVEEHKEELIQLAKTLISYQTPAPPARNTEGIQSWIAGYLNELGFSIDKWDVYPGDPNVVGKLKGTDSADYYSLIINGHVDVAEVKEDEEWKHDPFHPIEKNGLLIGRGASDMKGGMACVLFAVKLIREASIELPGDLILQSVIGEEVGEAGTLECCKRGYHADFAIVADTSDMHIQGQGGVITGWIEIKSSQTFHDGTRRNMIHAGGGTFGASAIEKMAKIIAGLGELERHWSIMKSYPGFKPGTNTINPAVIEGGRHAAFIADECRLWITVHFYPNETHDQVAAEIEDYVNRLSDSDIWLRENRPVFKWGGSSMIEDRGEIFPALEVDPGHPGVLALTASHQKVKRECPIIDVSQSVTDGGWLYDAGIPCVIYGPGDLHNAHSVNEKVSIEQLVEYTKIILDFIISWCSRKKEQ.

A coiled-coil region spans residues 1 to 31; that stretch reads MDQQIYSLQKKVEEHKEELIQLAKTLISYQT. Residue H89 coordinates Zn(2+). D91 is an active-site residue. D122 lines the Zn(2+) pocket. The active-site Proton acceptor is E156. Positions 157, 180, and 394 each coordinate Zn(2+).

This sequence belongs to the peptidase M20A family. It depends on Zn(2+) as a cofactor. Requires Co(2+) as cofactor.

The catalysed reaction is N-formyl-4-amino-5-aminomethyl-2-methylpyrimidine + H2O = 4-amino-5-aminomethyl-2-methylpyrimidine + formate. Its pathway is cofactor biosynthesis; thiamine diphosphate biosynthesis. Its function is as follows. Catalyzes the deformylation of the formylaminopyrimidine N-formyl-4-amino-5-aminomethyl-2-methylpyrimidine (FAMP) to give the corresponding aminopyrimidine. The polypeptide is N-formyl-4-amino-5-aminomethyl-2-methylpyrimidine deformylase (Bacillus subtilis (strain 168)).